The primary structure comprises 800 residues: Metabotropic glutamate receptor-like protein C (800 aa).

Residues 1–21 (MKMKIIFLILILIFSINIIKC) form the signal peptide. The Extracellular portion of the chain corresponds to 22–392 (DKEFKMLTLL…EVEFSQSLQY (371 aa)). 7 N-linked (GlcNAc...) asparagine glycosylation sites follow: Asn-69, Asn-107, Asn-166, Asn-258, Asn-276, Asn-302, and Asn-345. A helical transmembrane segment spans residues 393-413 (GFSITTGVLIAITIIMMLGIV). The Cytoplasmic portion of the chain corresponds to 414 to 426 (RYKSTPSIRSASP). The chain crosses the membrane as a helical span at residues 427-447 (IFLNFILAGGIIVYIGIIVWV). Residues 448–463 (GPANDHQCNARLWLVT) are Extracellular-facing. Residues 464-484 (LGFSTLIGSLVVKNFRIWLIF) form a helical membrane-spanning segment. Residues 485–499 (DNPELKSISITNYQL) lie on the Cytoplasmic side of the membrane. A helical membrane pass occupies residues 500 to 520 (FPWVGACLVINIILMSILTSV). The Extracellular segment spans residues 521-551 (GDLREIDAQGIDSLGKYEFMKVCKMNSSGAS). A glycan (N-linked (GlcNAc...) asparagine) is linked at Asn-546. A helical membrane pass occupies residues 552-572 (TLYTILAYFAALLLVGVFVSW). Residues 573-586 (KIRIVDIQEFNESK) lie on the Cytoplasmic side of the membrane. Residues 587-607 (AIANTLYAISFCLFVIVPLMI) traverse the membrane as a helical segment. Residues 608 to 616 (SPQDKQSET) lie on the Extracellular side of the membrane. The chain crosses the membrane as a helical span at residues 617 to 637 (IVLCTAGLFITTAALLIIFTP). Residues 638–800 (KFWRVFTLGD…NDTEEEDKNQ (163 aa)) are Cytoplasmic-facing. Disordered stretches follow at residues 658 to 694 (QSNVATARAESSKSSSGPKLNRRGNLVSDDFTDTETS) and 718 to 800 (EFDD…DKNQ). Positions 718 to 732 (EFDDNNIEQDNDNDN) are enriched in acidic residues. The segment covering 733–774 (DNNNNNNNNNNNNNNNNNNNNNNNNNNNNNNNNNNNNNNNNN) has biased composition (low complexity). A compositionally biased stretch (basic and acidic residues) spans 781–791 (NDEKVEEKQQN).

In the N-terminal section; belongs to the BMP lipoprotein family. The protein in the C-terminal section; belongs to the G-protein coupled receptor 3 family. GABA-B receptor subfamily.

The protein resides in the membrane. The polypeptide is Metabotropic glutamate receptor-like protein C (grlC) (Dictyostelium discoideum (Social amoeba)).